Here is a 295-residue protein sequence, read N- to C-terminus: 4-hydroxy-tetrahydrodipicolinate synthase (295 aa).

Residue T46 participates in pyruvate binding. Catalysis depends on Y134, which acts as the Proton donor/acceptor. Residue K162 is the Schiff-base intermediate with substrate of the active site. Residue I205 coordinates pyruvate.

The protein belongs to the DapA family. Homotetramer; dimer of dimers.

It is found in the cytoplasm. It carries out the reaction L-aspartate 4-semialdehyde + pyruvate = (2S,4S)-4-hydroxy-2,3,4,5-tetrahydrodipicolinate + H2O + H(+). The protein operates within amino-acid biosynthesis; L-lysine biosynthesis via DAP pathway; (S)-tetrahydrodipicolinate from L-aspartate: step 3/4. Its function is as follows. Catalyzes the condensation of (S)-aspartate-beta-semialdehyde [(S)-ASA] and pyruvate to 4-hydroxy-tetrahydrodipicolinate (HTPA). This chain is 4-hydroxy-tetrahydrodipicolinate synthase, found in Anaeromyxobacter sp. (strain Fw109-5).